Reading from the N-terminus, the 219-residue chain is Imidazole glycerol phosphate synthase subunit HisH (219 aa).

Residues 4–216 (TVTVLDYGSG…VDSLPATGRN (213 aa)) form the Glutamine amidotransferase type-1 domain. Cys-82 serves as the catalytic Nucleophile. Residues His-191 and Glu-193 contribute to the active site.

As to quaternary structure, heterodimer of HisH and HisF.

The protein resides in the cytoplasm. The enzyme catalyses 5-[(5-phospho-1-deoxy-D-ribulos-1-ylimino)methylamino]-1-(5-phospho-beta-D-ribosyl)imidazole-4-carboxamide + L-glutamine = D-erythro-1-(imidazol-4-yl)glycerol 3-phosphate + 5-amino-1-(5-phospho-beta-D-ribosyl)imidazole-4-carboxamide + L-glutamate + H(+). It catalyses the reaction L-glutamine + H2O = L-glutamate + NH4(+). The protein operates within amino-acid biosynthesis; L-histidine biosynthesis; L-histidine from 5-phospho-alpha-D-ribose 1-diphosphate: step 5/9. IGPS catalyzes the conversion of PRFAR and glutamine to IGP, AICAR and glutamate. The HisH subunit catalyzes the hydrolysis of glutamine to glutamate and ammonia as part of the synthesis of IGP and AICAR. The resulting ammonia molecule is channeled to the active site of HisF. The protein is Imidazole glycerol phosphate synthase subunit HisH of Renibacterium salmoninarum (strain ATCC 33209 / DSM 20767 / JCM 11484 / NBRC 15589 / NCIMB 2235).